A 591-amino-acid polypeptide reads, in one-letter code: Isocitrate dehydrogenase kinase/phosphatase (591 aa).

ATP-binding positions include 315 to 321 and K336; that span reads APGVKGM. D371 is a catalytic residue.

It belongs to the AceK family.

It localises to the cytoplasm. The catalysed reaction is L-seryl-[isocitrate dehydrogenase] + ATP = O-phospho-L-seryl-[isocitrate dehydrogenase] + ADP + H(+). In terms of biological role, bifunctional enzyme which can phosphorylate or dephosphorylate isocitrate dehydrogenase (IDH) on a specific serine residue. This is a regulatory mechanism which enables bacteria to bypass the Krebs cycle via the glyoxylate shunt in response to the source of carbon. When bacteria are grown on glucose, IDH is fully active and unphosphorylated, but when grown on acetate or ethanol, the activity of IDH declines drastically concomitant with its phosphorylation. This Pectobacterium atrosepticum (strain SCRI 1043 / ATCC BAA-672) (Erwinia carotovora subsp. atroseptica) protein is Isocitrate dehydrogenase kinase/phosphatase.